The chain runs to 133 residues: Ribosome-binding factor A (133 aa).

Belongs to the RbfA family. In terms of assembly, monomer. Binds 30S ribosomal subunits, but not 50S ribosomal subunits or 70S ribosomes.

It is found in the cytoplasm. One of several proteins that assist in the late maturation steps of the functional core of the 30S ribosomal subunit. Associates with free 30S ribosomal subunits (but not with 30S subunits that are part of 70S ribosomes or polysomes). Required for efficient processing of 16S rRNA. May interact with the 5'-terminal helix region of 16S rRNA. This chain is Ribosome-binding factor A, found in Trichormus variabilis (strain ATCC 29413 / PCC 7937) (Anabaena variabilis).